Here is a 666-residue protein sequence, read N- to C-terminus: Endogenous retrovirus group K member 9 Gag polyprotein (666 aa).

Gly2 is lipidated: N-myristoyl glycine. The disordered stretch occupies residues 165–264 (GKGPELVGPS…APPSRQGSEL (100 aa)). Residues 232-247 (GMPPAPQGRAPYPQPP) show a composition bias toward pro residues. 2 consecutive CCHC-type zinc fingers follow at residues 544 to 561 (GKCY…NCPV) and 580 to 597 (DLCP…QCRS). The disordered stretch occupies residues 598-641 (KFDKNGQPLSGNEQRGQPQAPQQTGAFPIQPFVPQGFQGQQPPL). The span at 604–622 (QPLSGNEQRGQPQAPQQTG) shows a compositional bias: polar residues. A compositionally biased stretch (low complexity) spans 624–640 (FPIQPFVPQGFQGQQPP).

It belongs to the beta type-B retroviral Gag protein family. HERV class-II K(HML-2) gag subfamily. Post-translationally, myristoylation is essential for retroviral assembly. Alteration of the glycine residue leads to a block in the budding of particles and an accumulation of Gag inside the cell. In terms of processing, specific enzymatic cleavages may yield mature proteins.

Its subcellular location is the cell membrane. In terms of biological role, the products of the Gag polyproteins of infectious retroviruses perform highly complex orchestrated tasks during the assembly, budding, maturation, and infection stages of the viral replication cycle. During viral assembly, the proteins form membrane associations and self-associations that ultimately result in budding of an immature virion from the infected cell. Gag precursors also function during viral assembly to selectively bind and package two plus strands of genomic RNA. Endogenous Gag proteins may have kept, lost or modified their original function during evolution. In Homo sapiens (Human), this protein is Endogenous retrovirus group K member 9 Gag polyprotein (ERVK-9).